The sequence spans 374 residues: Transcription factor NF-E2 45 kDa subunit (374 aa).

Disordered regions lie at residues 1 to 21 (MSPCPPQQSRNRVTQLPIPEP) and 40 to 61 (LNAPSEPSFEPPAPVPYPGPPP). The required for interaction with MAPK8 stretch occupies residues 1–83 (MSPCPPQQSR…PGFPLPAPPY (83 aa)). The tract at residues 1–207 (MSPCPPQQSR…PPAETPLALE (207 aa)) is transactivation domain. Over residues 48–61 (FEPPAPVPYPGPPP) the composition is skewed to pro residues. 2 consecutive short sequence motifs (PXY motif) follow at residues 61-65 (PPPSY) and 79-83 (PAPPY). The disordered stretch occupies residues 132–165 (LSAGPSKPQEDPESDSGLSLNYSDAESLELEGTE). Position 158 is a phosphoserine; by MAPK8 (S158). S171 is subject to Phosphoserine; by PKA. The tract at residues 207-227 (EPSSGPVRAKPTARGEAGSRD) is disordered. A bZIP domain is found at 267 to 330 (LVRDIRRRGK…EVMRQQLTDL (64 aa)). The basic motif stretch occupies residues 269–288 (RDIRRRGKNKVAAQNCRKRK). The segment at 292–299 (IVQLEREL) is leucine-zipper. K369 participates in a covalent cross-link: Glycyl lysine isopeptide (Lys-Gly) (interchain with G-Cter in SUMO); alternate. K369 is covalently cross-linked (Glycyl lysine isopeptide (Lys-Gly) (interchain with G-Cter in SUMO1); alternate).

It belongs to the bZIP family. CNC subfamily. Homodimer; can bind DNA as a homodimer. Erythroid transcription activator nuclear factor erythroid-derived 2 (NF-E2), composed of a heterodimer of NFE2 and MAFK, possesses transactivation activity on beta-globin. Also forms high affinity heterodimer with MAFG; the interaction promotes erythropoiesis. Interacts (via the PXY motif 1) with ITCH (via the WW 1 domain); the interaction promotes 'Lys63'-linked ubiquitination of NFE2, translocates it to the cytoplasm and inhibits its transactivation activity. Interacts with KMT2D/MLL2; the interaction promotes transactivation of the beta-globin locus. Interacts with MAPK8 (phosphorylated form); the interaction leads to phosphorylation of NFE2 in undifferentiated cells. In terms of processing, phosphorylated on serine residues. In undifferentiated erythrocytes, phosphorylated by MAPK8 which then leads to ubiquitination and protein degradation. Sumoylated. Sumoylation is required for translocation to nuclear bodies PODs, anchoring to the gene loci, and transactivation of the beta-globin gene. Post-translationally, ubiquitinated mainly by 'Lys63'-linked ubiquitin. Polyubiquitination with 'Lys63'-linked ubiquitin by ITCH retains NFE2 in the cytoplasm preventing its transactivation activity. In undifferentiated erythrocyte, is ubiquitinated after MAPK8-mediatd phosphorylation leading to protein degradation.

The protein localises to the nucleus. It localises to the cytoplasm. Its function is as follows. Component of the NF-E2 complex essential for regulating erythroid and megakaryocytic maturation and differentiation. Binds to the hypersensitive site 2 (HS2) of the beta-globin control region (LCR). This subunit (NFE2) recognizes the TCAT/C sequence of the AP-1-like core palindrome present in a number of erythroid and megakaryocytic gene promoters. Requires MAFK or other small MAF proteins for binding to the NF-E2 motif. May play a role in all aspects of hemoglobin production from globin and heme synthesis to procurement of iron. The polypeptide is Transcription factor NF-E2 45 kDa subunit (NFE2) (Bos taurus (Bovine)).